The following is a 1006-amino-acid chain: uncharacterized protein (1006 aa).

Residues 326-371 (EMEKKRPRSPELVPKKIVMEKERPSSPDSEAEEREHNLRIEKERHQ) are disordered. 2 stretches are compositionally biased toward basic and acidic residues: residues 338–350 (VPKK…ERPS) and 358–371 (EREH…ERHQ). Coiled-coil stretches lie at residues 358-473 (EREH…ARLA) and 756-782 (EVQK…AFGR).

This is an uncharacterized protein from Caenorhabditis elegans.